Reading from the N-terminus, the 214-residue chain is Late embryogenesis abundant protein At1g64065 (214 aa).

A helical membrane pass occupies residues 41-61 (VYSLTIIVIIFALCLILSSIF).

This sequence belongs to the LEA type 2 family.

The protein localises to the membrane. This is Late embryogenesis abundant protein At1g64065 from Arabidopsis thaliana (Mouse-ear cress).